A 332-amino-acid polypeptide reads, in one-letter code: C4-dicarboxylate-binding periplasmic protein DctP (332 aa).

Positions 1 to 22 (MFKPLTLIAASILAVTSFNAAA) are cleaved as a signal peptide.

Belongs to the bacterial solute-binding protein 7 family. In terms of assembly, the complex comprises the extracytoplasmic solute receptor protein DctP, and the two transmembrane proteins DctQ and DctM.

The protein resides in the periplasm. In terms of biological role, part of the tripartite ATP-independent periplasmic (TRAP) transport system DctPQM involved in C4-dicarboxylates uptake. The sequence is that of C4-dicarboxylate-binding periplasmic protein DctP from Vibrio cholerae serotype O1 (strain ATCC 39315 / El Tor Inaba N16961).